Reading from the N-terminus, the 471-residue chain is Ribulose bisphosphate carboxylase large chain (471 aa).

Residues Asn115 and Thr165 each coordinate substrate. Residue Lys167 is the Proton acceptor of the active site. Lys169 is a substrate binding site. Lys193, Asp195, and Glu196 together coordinate Mg(2+). Lys193 is modified (N6-carboxylysine). Residue His286 is the Proton acceptor of the active site. Arg287, His319, and Ser371 together coordinate substrate.

This sequence belongs to the RuBisCO large chain family. Type I subfamily. In terms of assembly, heterohexadecamer of 8 large chains and 8 small chains. The cofactor is Mg(2+).

The protein resides in the carboxysome. It catalyses the reaction 2 (2R)-3-phosphoglycerate + 2 H(+) = D-ribulose 1,5-bisphosphate + CO2 + H2O. The catalysed reaction is D-ribulose 1,5-bisphosphate + O2 = 2-phosphoglycolate + (2R)-3-phosphoglycerate + 2 H(+). Its function is as follows. RuBisCO catalyzes two reactions: the carboxylation of D-ribulose 1,5-bisphosphate, the primary event in carbon dioxide fixation, as well as the oxidative fragmentation of the pentose substrate in the photorespiration process. Both reactions occur simultaneously and in competition at the same active site. The chain is Ribulose bisphosphate carboxylase large chain from Synechococcus sp. (strain CC9605).